The chain runs to 166 residues: 3-isopropylmalate dehydratase small subunit (166 aa).

This sequence belongs to the LeuD family. LeuD type 2 subfamily. As to quaternary structure, heterodimer of LeuC and LeuD.

It carries out the reaction (2R,3S)-3-isopropylmalate = (2S)-2-isopropylmalate. It participates in amino-acid biosynthesis; L-leucine biosynthesis; L-leucine from 3-methyl-2-oxobutanoate: step 2/4. Catalyzes the isomerization between 2-isopropylmalate and 3-isopropylmalate, via the formation of 2-isopropylmaleate. In Nautilia profundicola (strain ATCC BAA-1463 / DSM 18972 / AmH), this protein is 3-isopropylmalate dehydratase small subunit.